A 266-amino-acid chain; its full sequence is Protein STAY-GREEN homolog, chloroplastic (266 aa).

The N-terminal 50 residues, 1-50, are a transit peptide targeting the chloroplast; sequence MGTLTASLVAPSKLNPEKHSSLFVYKTRRKSHKNQSIVPVARLFGPAIFE.

The protein belongs to the staygreen family.

Its subcellular location is the plastid. The protein resides in the chloroplast. Its function is as follows. Required to trigger chlorophyll degradation during leaf senescence and fruit ripening. This Capsicum annuum (Capsicum pepper) protein is Protein STAY-GREEN homolog, chloroplastic.